The primary structure comprises 239 residues: MKLINCISIALLCTLVDFSSAEITVISNLAVVGSPESHVGTPNKTLYANIQNLWCGAQNLGEHIDVEYGEFTRLSDGKVFKGTVNQGKVYLEIGKASVKVAGRYRCEVRTLDKEIHSGNLIIYMPPVLDFPAAVRVSEVLNARPPHVIGAERRGLHGERMVLECPVLANPEPMVRWEKNGEPLGNSDSIEYDGNNLILNSLTEDHIGKYRCIGDNSFPLFVDGPAIPHQIYFDQDIKVL.

An N-terminal signal peptide occupies residues 1-21 (MKLINCISIALLCTLVDFSSA). N-linked (GlcNAc...) asparagine glycosylation occurs at Asn43. Residues 145–211 (PHVIGAERRG…TEDHIGKYRC (67 aa)) form the Ig-like C2-type domain. A disulfide bridge connects residues Cys164 and Cys211.

As to expression, expressed in body wall muscles.

It is found in the secreted. In terms of biological role, probably not involved in maintaining the position of ASI and ASH head neuron cell bodies and ventral nerve cord axons of PVQ, PVP, RMEV, AVK and HSN neurons. The protein is Zwei Ig domain protein zig-7 of Caenorhabditis elegans.